Reading from the N-terminus, the 31-residue chain is Cytochrome b6-f complex subunit 6 (31 aa).

Residues 4-24 traverse the membrane as a helical segment; the sequence is VISYLSLLFISFLFALTLFIV.

Belongs to the PetL family. In terms of assembly, the 4 large subunits of the cytochrome b6-f complex are cytochrome b6, subunit IV (17 kDa polypeptide, PetD), cytochrome f and the Rieske protein, while the 4 small subunits are PetG, PetL, PetM and PetN. The complex functions as a dimer.

The protein resides in the plastid. Its subcellular location is the chloroplast thylakoid membrane. Functionally, component of the cytochrome b6-f complex, which mediates electron transfer between photosystem II (PSII) and photosystem I (PSI), cyclic electron flow around PSI, and state transitions. PetL is important for photoautotrophic growth as well as for electron transfer efficiency and stability of the cytochrome b6-f complex. The protein is Cytochrome b6-f complex subunit 6 of Chara vulgaris (Common stonewort).